Here is a 79-residue protein sequence, read N- to C-terminus: Serine protease inhibitor Kazal-type 1 (79 aa).

A signal peptide spans 1 to 23; sequence MKVTGIFLLSALALLSLSGNTGA. The Kazal-like domain maps to 26-79; that stretch reads LGREAKCYNELNGCTKIYDPVCGTDGNTYPNECVLCFENRKRQTSILIQKSGPC. 3 disulfide bridges follow: Cys32/Cys61, Cys39/Cys58, and Cys47/Cys79.

It is found in the secreted. In terms of biological role, serine protease inhibitor which exhibits anti-trypsin activity. In the pancreas, protects against trypsin-catalyzed premature activation of zymogens. Its function is as follows. In the male reproductive tract, binds to sperm heads where it modulates sperm capacitance by inhibiting calcium uptake and nitrogen oxide (NO) production. The polypeptide is Serine protease inhibitor Kazal-type 1 (SPINK1) (Homo sapiens (Human)).